A 248-amino-acid polypeptide reads, in one-letter code: MYKLVLVRHGESEWNKENLFTGWTDVKLSEKGISEALEGGRVLKQEGYSFDIAFSSVLVRANDTLNIILRELGQSYIDVEKSWRLNERHYGALQGLNKAETAEKYGEDKVLMWRRSYDIPPMPLEESDKRHPIHDLRYRGIPKSELPSTECLKDTVARVIPYWTDKIARAIIEGKKVIIAAHGNSLRALVKYLDNMSDDDILKLNIPTGIPLVYELDRDLRPIKHYYLGDEDKIKAAMESVANQGKKK.

Residues 8–15, 21–22, arginine 60, 87–90, lysine 98, 114–115, and 183–184 each bind substrate; these read RHGESEWN, TG, ERHY, RR, and GN. Histidine 9 (tele-phosphohistidine intermediate) is an active-site residue. Glutamate 87 serves as the catalytic Proton donor/acceptor.

It belongs to the phosphoglycerate mutase family. BPG-dependent PGAM subfamily.

It catalyses the reaction (2R)-2-phosphoglycerate = (2R)-3-phosphoglycerate. It functions in the pathway carbohydrate degradation; glycolysis; pyruvate from D-glyceraldehyde 3-phosphate: step 3/5. Catalyzes the interconversion of 2-phosphoglycerate and 3-phosphoglycerate. The polypeptide is 2,3-bisphosphoglycerate-dependent phosphoglycerate mutase (Borrelia turicatae (strain 91E135)).